The chain runs to 682 residues: Probable methyltransferase PMT12 (682 aa).

At Met-1–Arg-11 the chain is on the cytoplasmic side. Residues Asn-12–Gly-32 form a helical; Signal-anchor for type II membrane protein membrane-spanning segment. Over Lys-33–Ala-682 the chain is Lumenal. 12 N-linked (GlcNAc...) asparagine glycosylation sites follow: Asn-67, Asn-103, Asn-125, Asn-155, Asn-173, Asn-193, Asn-273, Asn-350, Asn-395, Asn-419, Asn-600, and Asn-625.

The protein belongs to the methyltransferase superfamily.

The protein resides in the golgi apparatus membrane. The chain is Probable methyltransferase PMT12 from Arabidopsis thaliana (Mouse-ear cress).